The sequence spans 600 residues: UvrABC system protein C (600 aa).

The GIY-YIG domain occupies 15–100 (NSAGVYQYFN…IKQLHPKYNI (86 aa)). A UVR domain is found at 203 to 238 (SILIKNLEKQMLVLAQNENYEEAAKVRDQIVTIKDL).

Belongs to the UvrC family. As to quaternary structure, interacts with UvrB in an incision complex.

Its subcellular location is the cytoplasm. In terms of biological role, the UvrABC repair system catalyzes the recognition and processing of DNA lesions. UvrC both incises the 5' and 3' sides of the lesion. The N-terminal half is responsible for the 3' incision and the C-terminal half is responsible for the 5' incision. The protein is UvrABC system protein C of Campylobacter jejuni subsp. jejuni serotype O:23/36 (strain 81-176).